The primary structure comprises 280 residues: MDLRVRTLLGGDRLRILLMFFHVMVQTVAEQEVENLSGLSTNPEKDIFVVRENGTTCLMAEFAAKFIVPYDVWASNYVDLITEQAEISLTRGAEVKGHCGHNESELEVFWVDHAYTLRMLFVKESHNTSKGPEATWNLNKVHFVYDSSEKTHFKAPVKVNKYIASSHHLSALVTPAGMSYECQAQQTISLASSDPQKTVTMILSAVHIQPFDIISDFVFSEEHKCPVDEQEQLEETLPLILGLILGLVIVITLVIYHIHHKMTANQVQIPRDRSQYKHMG.

An N-terminal signal peptide occupies residues 1–29 (MDLRVRTLLGGDRLRILLMFFHVMVQTVA). Residues 30–235 (EQEVENLSGL…PVDEQEQLEE (206 aa)) are Extracellular-facing. Residues Asn-35, Asn-53, Asn-102, and Asn-127 are each glycosylated (N-linked (GlcNAc...) asparagine). A helical membrane pass occupies residues 236 to 256 (TLPLILGLILGLVIVITLVIY). Residues 257 to 280 (HIHHKMTANQVQIPRDRSQYKHMG) lie on the Cytoplasmic side of the membrane.

Belongs to the LAMP family. Post-translationally, glycosylated. In terms of tissue distribution, in brain, strongly expressed in the globus pallidus/ventral pallidum complex, the substantia nigra pars reticulata and the entopeduncular nucleus (at protein level). Expressed in the external plexiform layer of the olfactory bulb (at protein level). May be weakly expressed in neocortex and striatum (at protein level). Highly expressed in brain; not detected in other tissues tested. Detected in the cingulate cortex, cortical plate and caudate putamen. In neocortex, specifically expressed in neurons of layers II/III and V.

It localises to the cytoplasmic vesicle membrane. The protein localises to the cell membrane. Its subcellular location is the cell projection. The protein resides in the dendrite. It is found in the cytoplasmic vesicle. It localises to the secretory vesicle. The protein localises to the synaptic vesicle membrane. Its subcellular location is the growth cone membrane. The protein resides in the early endosome membrane. It is found in the recycling endosome. It localises to the endoplasmic reticulum-Golgi intermediate compartment membrane. The protein localises to the endosome membrane. In terms of biological role, plays a role in short-term synaptic plasticity in a subset of GABAergic neurons in the brain. This is Lysosome-associated membrane glycoprotein 5 (Lamp5) from Mus musculus (Mouse).